Consider the following 658-residue polypeptide: Protein translocase subunit SecA 3 (658 aa).

Residues Q111, G129–T133, and D536 contribute to the ATP site.

It belongs to the SecA family. In terms of assembly, monomer and homodimer. Part of the essential Sec protein translocation apparatus which comprises SecA, SecYEG and auxiliary proteins SecDF-YajC and YidC.

The protein localises to the cell inner membrane. It localises to the cytoplasm. It catalyses the reaction ATP + H2O + cellular proteinSide 1 = ADP + phosphate + cellular proteinSide 2.. Functionally, part of the Sec protein translocase complex. Interacts with the SecYEG preprotein conducting channel. Has a central role in coupling the hydrolysis of ATP to the transfer of proteins into and across the cell membrane, serving both as a receptor for the preprotein-SecB complex and as an ATP-driven molecular motor driving the stepwise translocation of polypeptide chains across the membrane. The sequence is that of Protein translocase subunit SecA 3 from Magnetococcus marinus (strain ATCC BAA-1437 / JCM 17883 / MC-1).